A 288-amino-acid polypeptide reads, in one-letter code: Putative transcription factor kapC (288 aa).

Over residues 1-10 the composition is skewed to pro residues; it reads MQPTLAPAPH. The disordered stretch occupies residues 1–121; it reads MQPTLAPAPH…AAQRAFRQRK (121 aa). Residues 26–41 show a composition bias toward low complexity; the sequence is HDQLLAAHQHLSHPQQ. Over residues 42–54 the composition is skewed to pro residues; that stretch reads ARPPPPPPQPPHM. Positions 84 to 93 are enriched in polar residues; the sequence is QPDLSGQESP. The region spanning 100-163 is the bZIP domain; the sequence is PLSTSKRAAQ…EYIINLQSRL (64 aa). The segment at 101-124 is basic motif; the sequence is LSTSKRAAQNRAAQRAFRQRKEAH. Low complexity predominate over residues 106–116; the sequence is RAAQNRAAQRA. The interval 128–159 is leucine-zipper; the sequence is LEGKVKAYETMGEAIKALQAENYQLREYIINL. Disordered stretches follow at residues 172-226 and 242-288; these read ELPG…NDDM and PPTE…PLIS. A compositionally biased stretch (pro residues) spans 202–212; it reads PVPPPTAPQQP. Low complexity predominate over residues 213–222; the sequence is QPAQNQASAP.

This sequence belongs to the bZIP family.

The protein localises to the nucleus. Putative transcription factor. This chain is Putative transcription factor kapC (kapC), found in Aspergillus clavatus (strain ATCC 1007 / CBS 513.65 / DSM 816 / NCTC 3887 / NRRL 1 / QM 1276 / 107).